The chain runs to 206 residues: Platelet glycoprotein Ib beta chain (206 aa).

The N-terminal stretch at 1–26 (MGSRPRGALSLLLLLLALLSRPASGC) is a signal peptide. 2 disulfides stabilise this stretch: Cys-26–Cys-32 and Cys-30–Cys-39. An LRRNT domain is found at 27 to 55 (PAPCSCAGTLVDCGRRGLTWASLPAAFPP). Over 27–147 (PAPCSCAGTL…RAACAPGLLC (121 aa)) the chain is Extracellular. Residues 60 to 83 (LVLTGNNLTALPPGLLDALPALRA) form an LRR repeat. N-linked (GlcNAc...) asparagine glycosylation occurs at Asn-66. The 55-residue stretch at 89–143 (NPWRCDCRLLPLRAWLAGRPERAPYRDLRCVAPPALRGRLLPYVAEDELRAACAP) folds into the LRRCT domain. 2 disulfide bridges follow: Cys-93/Cys-118 and Cys-95/Cys-141. The chain crosses the membrane as a helical span at residues 148–172 (WGALVAQLALLVLGLLHALLLALLL). Over 173–206 (GRLRRLRARARARSIQEFSLTAPLVAESARGGAS) the chain is Cytoplasmic. Residues Ser-186 and Ser-191 each carry the phosphoserine modification. At Thr-193 the chain carries Phosphothreonine. Ser-200 is modified (phosphoserine).

Two GP-Ib beta are disulfide-linked to one GP-Ib alpha. GP-IX is complexed with the GP-Ib heterodimer via a non covalent linkage. Interacts with TRAF4.

The protein resides in the membrane. In terms of biological role, gp-Ib, a surface membrane protein of platelets, participates in the formation of platelet plugs by binding to von Willebrand factor, which is already bound to the subendothelium. The polypeptide is Platelet glycoprotein Ib beta chain (Gp1bb) (Mus musculus (Mouse)).